A 333-amino-acid chain; its full sequence is Ketol-acid reductoisomerase (NADP(+)) (333 aa).

One can recognise a KARI N-terminal Rossmann domain in the interval 2-182 (ANIYYDADCD…GGGRAGILET (181 aa)). NADP(+)-binding positions include 25-28 (YGSQ), Lys-48, Ser-51, Ser-53, and 83-86 (DTIQ). His-108 is a catalytic residue. Gly-134 serves as a coordination point for NADP(+). The KARI C-terminal knotted domain occupies 183 to 331 (SFREETETDL…KKLRSMMKWL (149 aa)). 4 residues coordinate Mg(2+): Asp-191, Glu-195, Glu-227, and Glu-231. Ser-252 serves as a coordination point for substrate.

The protein belongs to the ketol-acid reductoisomerase family. Requires Mg(2+) as cofactor.

It carries out the reaction (2R)-2,3-dihydroxy-3-methylbutanoate + NADP(+) = (2S)-2-acetolactate + NADPH + H(+). The enzyme catalyses (2R,3R)-2,3-dihydroxy-3-methylpentanoate + NADP(+) = (S)-2-ethyl-2-hydroxy-3-oxobutanoate + NADPH + H(+). It functions in the pathway amino-acid biosynthesis; L-isoleucine biosynthesis; L-isoleucine from 2-oxobutanoate: step 2/4. It participates in amino-acid biosynthesis; L-valine biosynthesis; L-valine from pyruvate: step 2/4. Its function is as follows. Involved in the biosynthesis of branched-chain amino acids (BCAA). Catalyzes an alkyl-migration followed by a ketol-acid reduction of (S)-2-acetolactate (S2AL) to yield (R)-2,3-dihydroxy-isovalerate. In the isomerase reaction, S2AL is rearranged via a Mg-dependent methyl migration to produce 3-hydroxy-3-methyl-2-ketobutyrate (HMKB). In the reductase reaction, this 2-ketoacid undergoes a metal-dependent reduction by NADPH to yield (R)-2,3-dihydroxy-isovalerate. The polypeptide is Ketol-acid reductoisomerase (NADP(+)) (Leptospira borgpetersenii serovar Hardjo-bovis (strain JB197)).